The primary structure comprises 222 residues: L-serine dehydratase, beta chain (222 aa).

The ACT domain occupies 150–222 (TILLEYPEQR…RFTTAKYVEV (73 aa)).

Belongs to the iron-sulfur dependent L-serine dehydratase family. As to quaternary structure, heterooctamer of four alpha chains and four beta chains. [4Fe-4S] cluster serves as cofactor.

It carries out the reaction L-serine = pyruvate + NH4(+). It functions in the pathway carbohydrate biosynthesis; gluconeogenesis. The protein is L-serine dehydratase, beta chain (sdhB) of Peptoniphilus asaccharolyticus (Peptostreptococcus asaccharolyticus).